Reading from the N-terminus, the 503-residue chain is Probable cytosol aminopeptidase (503 aa).

2 residues coordinate Mn(2+): Lys-270 and Asp-275. The active site involves Lys-282. Positions 293, 352, and 354 each coordinate Mn(2+). Arg-356 is a catalytic residue.

It belongs to the peptidase M17 family. Requires Mn(2+) as cofactor.

Its subcellular location is the cytoplasm. It catalyses the reaction Release of an N-terminal amino acid, Xaa-|-Yaa-, in which Xaa is preferably Leu, but may be other amino acids including Pro although not Arg or Lys, and Yaa may be Pro. Amino acid amides and methyl esters are also readily hydrolyzed, but rates on arylamides are exceedingly low.. The enzyme catalyses Release of an N-terminal amino acid, preferentially leucine, but not glutamic or aspartic acids.. Functionally, presumably involved in the processing and regular turnover of intracellular proteins. Catalyzes the removal of unsubstituted N-terminal amino acids from various peptides. In Shigella boydii serotype 4 (strain Sb227), this protein is Probable cytosol aminopeptidase.